The sequence spans 76 residues: Small ribosomal subunit protein bS16 (76 aa).

It belongs to the bacterial ribosomal protein bS16 family.

In Helicobacter acinonychis (strain Sheeba), this protein is Small ribosomal subunit protein bS16.